The following is a 296-amino-acid chain: Formamidopyrimidine-DNA glycosylase (296 aa).

Pro-2 serves as the catalytic Schiff-base intermediate with DNA. The Proton donor role is filled by Glu-3. Lys-58 (proton donor; for beta-elimination activity) is an active-site residue. Residues His-106, Arg-125, and Lys-167 each coordinate DNA. An FPG-type zinc finger spans residues 258-294 (RVYDRVGLPCSRPGCAGAITRIVQANRSTFFCATCQP). The Proton donor; for delta-elimination activity role is filled by Arg-284.

Belongs to the FPG family. As to quaternary structure, monomer. Zn(2+) serves as cofactor.

The catalysed reaction is Hydrolysis of DNA containing ring-opened 7-methylguanine residues, releasing 2,6-diamino-4-hydroxy-5-(N-methyl)formamidopyrimidine.. The enzyme catalyses 2'-deoxyribonucleotide-(2'-deoxyribose 5'-phosphate)-2'-deoxyribonucleotide-DNA = a 3'-end 2'-deoxyribonucleotide-(2,3-dehydro-2,3-deoxyribose 5'-phosphate)-DNA + a 5'-end 5'-phospho-2'-deoxyribonucleoside-DNA + H(+). Functionally, involved in base excision repair of DNA damaged by oxidation or by mutagenic agents. Acts as a DNA glycosylase that recognizes and removes damaged bases. Has a preference for oxidized purines, such as 7,8-dihydro-8-oxoguanine (8-oxoG). Has AP (apurinic/apyrimidinic) lyase activity and introduces nicks in the DNA strand. Cleaves the DNA backbone by beta-delta elimination to generate a single-strand break at the site of the removed base with both 3'- and 5'-phosphates. This Methylobacterium radiotolerans (strain ATCC 27329 / DSM 1819 / JCM 2831 / NBRC 15690 / NCIMB 10815 / 0-1) protein is Formamidopyrimidine-DNA glycosylase.